The chain runs to 96 residues: Nucleoid-associated protein DR_0199 (96 aa).

The protein belongs to the YbaB/EbfC family. Homodimer.

It is found in the cytoplasm. Its subcellular location is the nucleoid. In terms of biological role, binds to DNA and alters its conformation. May be involved in regulation of gene expression, nucleoid organization and DNA protection. The protein is Nucleoid-associated protein DR_0199 of Deinococcus radiodurans (strain ATCC 13939 / DSM 20539 / JCM 16871 / CCUG 27074 / LMG 4051 / NBRC 15346 / NCIMB 9279 / VKM B-1422 / R1).